The following is a 195-amino-acid chain: MILSDADIRRRLDEGDLAIEPLDDPELQVQPASVDLRLGREFLEFQRANISCIHPTSEREVDEYVDETYVEEGEEFVLHPGDFVLGTTKERVEIPPDLIAHVEGRSSLGRLAIVVHATAGLCDPGYQGQITLELSNLGTAPVALSPGMRISQLTFTELKSPAERPYGAERGSKYQGQTGPQASRIQGDREFGGDQ.

DCTP contacts are provided by residues 105–110, Asp-123, 131–133, Gln-152, Tyr-166, Lys-173, and Gln-177; these read RSSLGR and TLE. The active-site Proton donor/acceptor is Glu-133. The disordered stretch occupies residues 159–195; it reads KSPAERPYGAERGSKYQGQTGPQASRIQGDREFGGDQ. Residues 160-172 are compositionally biased toward basic and acidic residues; that stretch reads SPAERPYGAERGS. The segment covering 174–184 has biased composition (polar residues); it reads YQGQTGPQASR. A compositionally biased stretch (basic and acidic residues) spans 186 to 195; the sequence is QGDREFGGDQ.

The protein belongs to the dCTP deaminase family. In terms of assembly, homotrimer.

It catalyses the reaction dCTP + H2O + H(+) = dUTP + NH4(+). Its pathway is pyrimidine metabolism; dUMP biosynthesis; dUMP from dCTP (dUTP route): step 1/2. In terms of biological role, catalyzes the deamination of dCTP to dUTP. This is dCTP deaminase from Natronomonas pharaonis (strain ATCC 35678 / DSM 2160 / CIP 103997 / JCM 8858 / NBRC 14720 / NCIMB 2260 / Gabara) (Halobacterium pharaonis).